Consider the following 492-residue polypeptide: Diacylglycerol kinase 7 (492 aa).

The region spanning Ala90–Ser248 is the DAGKc domain.

This sequence belongs to the eukaryotic diacylglycerol kinase family. Monomer. Highly expressed in flowers, and at low levels in roots, stems and leaves.

The catalysed reaction is a 1,2-diacyl-sn-glycerol + ATP = a 1,2-diacyl-sn-glycero-3-phosphate + ADP + H(+). In terms of biological role, phosphorylates the second messenger diacylglycerol (DAG) to generate phosphatidic acid (PA), another important signaling molecule. PA is required for plant development and responses to abiotic stress and pathogen attack. May be involved in the accumulation of PA during cold stress xhibits high specificity for 1,2-dioleoyl-sn-glycerol (1,2-DOG), 1-palmitoyl, 2-oleoyl-sn-glycerol (1,2 POG), 1-stearoyl, 2-linoleoyl-sn-glycerol (1,2-SLG) and 1-oleoyl, 2-palmitoyl-sn-glycerol (1,2-OPG). The sequence is that of Diacylglycerol kinase 7 (DGK7) from Arabidopsis thaliana (Mouse-ear cress).